Here is a 468-residue protein sequence, read N- to C-terminus: Mitochondrial adenyl nucleotide antiporter SLC25A23 (468 aa).

Positions 1-149 are regulatory N-terminal domain; the sequence is MRGSPGDAER…DHFLLHSLEN (149 aa). Residues 1 to 188 lie on the Mitochondrial intermembrane side of the membrane; it reads MRGSPGDAER…EKLTGMWWKQ (188 aa). The 36-residue stretch at 9 to 44 folds into the EF-hand 1 domain; the sequence is ERRQRWGRLFEELDSNKDGRVDVHELRQGLARLGGG. Residues Asp22, Asn24, Asp26, Arg28, and Glu33 each coordinate Ca(2+). The segment at 34–67 is disordered; sequence LRQGLARLGGGNPDPGAQQGISSEGDADPDGGLD. Residues 58–67 show a composition bias toward acidic residues; it reads GDADPDGGLD. 2 EF-hand domains span residues 77-112 and 113-148; these read EREQRLLLMFHSLDRNQDGHIDVSEIQQSFRALGIS and ISLEQAEKILHSMDRDGTMTIDWQEWRDHFLLHSLE. Ca(2+) is bound by residues Asp90, Asn92, Asp94, His96, and Glu101. A linker region region spans residues 150-159; it reads VEDVLYFWKH. A C-terminal transmembrane transporter domain region spans residues 165 to 468; it reads IGECLTVPDE…MKQALGVTSR (304 aa). 3 Solcar repeats span residues 183-269, 277-362, and 374-462; these read GMWW…IKRA, LHVQ…LKNW, and PGIL…MKQA. Residues 189–206 traverse the membrane as a helical segment; it reads LVAGAVAGAVSRTGTAPL. Residues 207-243 lie on the Mitochondrial matrix side of the membrane; the sequence is DRLKVFMQVHASKTNRLNILGGLRSMVLEGGIRSLWR. Residues 244-263 form a helical membrane-spanning segment; it reads GNGINVLKIAPESAIKFMAY. The Mitochondrial intermembrane segment spans residues 264 to 286; sequence EQIKRAILGQQETLHVQERFVAG. Residues 287 to 300 traverse the membrane as a helical segment; sequence SLAGATAQTIIYPM. Residues 301-336 are Mitochondrial matrix-facing; it reads EVLKTRLTLRRTGQYKGLLDCARRILEREGPRAFYR. The chain crosses the membrane as a helical span at residues 337–356; that stretch reads GYLPNVLGIIPYAGIDLAVY. Residues 357 to 379 are Mitochondrial intermembrane-facing; sequence ETLKNWWLQQYSHDSADPGILVL. A helical transmembrane segment spans residues 380–397; sequence LACGTISSTCGQIASYPL. Over 398–436 the chain is Mitochondrial matrix; the sequence is ALVRTRMQAQASIEGGPQLSMLGLLRHILSQEGMRGLYR. The helical transmembrane segment at 437–456 threads the bilayer; sequence GIAPNFMKVIPAVSISYVVY. The Mitochondrial intermembrane portion of the chain corresponds to 457–468; sequence ENMKQALGVTSR.

This sequence belongs to the mitochondrial carrier (TC 2.A.29) family. Interacts with MCU. Interacts with MICU1. As to expression, expressed at low levels in most tissues examined, with highest expression in brain, skeletal muscle and pancreas.

The protein localises to the mitochondrion inner membrane. It carries out the reaction Mg(2+)(out) + phosphate(in) + ATP(out) = Mg(2+)(in) + phosphate(out) + ATP(in). The catalysed reaction is ADP(out) + phosphate(in) + H(+)(out) = ADP(in) + phosphate(out) + H(+)(in). The enzyme catalyses AMP(out) + phosphate(in) = AMP(in) + phosphate(out). It catalyses the reaction phosphate(in) + ATP(out) + 2 H(+)(out) = phosphate(out) + ATP(in) + 2 H(+)(in). It carries out the reaction dADP(in) + ADP(out) = dADP(out) + ADP(in). The catalysed reaction is Mg(2+)(in) + ADP(out) + ATP(in) + H(+)(out) = Mg(2+)(out) + ADP(in) + ATP(out) + H(+)(in). The enzyme catalyses ADP(out) + diphosphate(in) = ADP(in) + diphosphate(out). It catalyses the reaction dAMP(in) + ADP(out) + H(+)(out) = dAMP(out) + ADP(in) + H(+)(in). It carries out the reaction 3'-AMP(in) + ADP(out) + H(+)(out) = 3'-AMP(out) + ADP(in) + H(+)(in). The catalysed reaction is dAMP(out) + phosphate(in) = dAMP(in) + phosphate(out). The enzyme catalyses 3'-AMP(out) + phosphate(in) = 3'-AMP(in) + phosphate(out). It catalyses the reaction dADP(out) + phosphate(in) + H(+)(out) = dADP(in) + phosphate(out) + H(+)(in). Activated by an increase in cytosolic calcium levels that induce a conformational change of the N-terminal regulatory domain, uncapping the channel and allowing transport. Inhibited by bathophenanthroline, mersalyl, p-hydroxymercuribenzoate, bromcresol purple, tannic acid, pyridoxal 5'-phosphate and p-hydroxymercuribenzoate. In terms of biological role, electroneutral antiporter that mediates the transport of adenine nucleotides through the inner mitochondrial membrane. Originally identified as an ATP-magnesium/inorganic phosphate antiporter, it also acts as a broad specificity adenyl nucleotide antiporter. By regulating the mitochondrial matrix adenine nucleotide pool could adapt to changing cellular energetic demands and indirectly regulate adenine nucleotide-dependent metabolic pathways. Also acts as a regulator of mitochondrial calcium uptake and can probably transport trace amounts of other divalent metal cations in complex with ATP. In vitro, a low activity is also observed with guanyl and pyrimidine nucleotides. This Homo sapiens (Human) protein is Mitochondrial adenyl nucleotide antiporter SLC25A23.